We begin with the raw amino-acid sequence, 144 residues long: NADH-ubiquinone oxidoreductase chain 6 (144 aa).

5 consecutive transmembrane segments (helical) span residues 1 to 21 (MLGS…INVD), 26 to 46 (SFFL…FLHV), 47 to 67 (WFSY…LVYF), 76 to 96 (VVTP…YPFF), and 108 to 128 (FYFS…IFFM).

Belongs to the complex I subunit 6 family.

The protein resides in the mitochondrion membrane. The catalysed reaction is a ubiquinone + NADH + 5 H(+)(in) = a ubiquinol + NAD(+) + 4 H(+)(out). Its function is as follows. Core subunit of the mitochondrial membrane respiratory chain NADH dehydrogenase (Complex I) that is believed to belong to the minimal assembly required for catalysis. Complex I functions in the transfer of electrons from NADH to the respiratory chain. The immediate electron acceptor for the enzyme is believed to be ubiquinone. The chain is NADH-ubiquinone oxidoreductase chain 6 (ND6) from Ascaris suum (Pig roundworm).